The chain runs to 141 residues: Large ribosomal subunit protein uL11 (141 aa).

This sequence belongs to the universal ribosomal protein uL11 family. Part of the ribosomal stalk of the 50S ribosomal subunit. Interacts with L10 and the large rRNA to form the base of the stalk. L10 forms an elongated spine to which L12 dimers bind in a sequential fashion forming a multimeric L10(L12)X complex. One or more lysine residues are methylated.

In terms of biological role, forms part of the ribosomal stalk which helps the ribosome interact with GTP-bound translation factors. This chain is Large ribosomal subunit protein uL11, found in Streptococcus mutans serotype c (strain ATCC 700610 / UA159).